A 1327-amino-acid chain; its full sequence is Putative ATP-dependent RNA helicase ucp12 (1327 aa).

Disordered stretches follow at residues 1-58 and 201-222; these read MGSK…KQLV and QAARASSAAKPPPKASQKNEKV. Residues 18-41 are compositionally biased toward basic and acidic residues; sequence SKNKEKNIKGKKKNSLDPIEKNKQ. The segment covering 42–58 has biased composition (polar residues); the sequence is ETAGLQTTSRPTAKQLV. The UBA domain occupies 276-315; it reads EPDTSIVNDLISLGFRDIHAKEACQYCVSLEDALEWLIIH. The region spanning 405–504 is the RWD domain; sequence DDVSALQSIL…NHLQENIEDF (100 aa). In terms of domain architecture, Helicase ATP-binding spans 587-756; sequence MDAIQHSQVV…FGNAGHLHIH (170 aa). 600 to 607 contributes to the ATP binding site; it reads GETGSGKS. The DEAH box motif lies at 703–706; it reads DEVH. Residues 797–968 enclose the Helicase C-terminal domain; it reads LISRLVSSID…QVCLNVVPLV (172 aa).

It belongs to the DEAD box helicase family. DEAH subfamily.

It is found in the cytoplasm. The enzyme catalyses ATP + H2O = ADP + phosphate + H(+). Its function is as follows. Probable ATP-binding RNA helicase. The sequence is that of Putative ATP-dependent RNA helicase ucp12 (ucp12) from Schizosaccharomyces pombe (strain 972 / ATCC 24843) (Fission yeast).